We begin with the raw amino-acid sequence, 253 residues long: tRNA (guanine-N(1)-)-methyltransferase (253 aa).

S-adenosyl-L-methionine is bound by residues Gly116 and 136-141 (VGDYIL).

This sequence belongs to the RNA methyltransferase TrmD family. As to quaternary structure, homodimer.

Its subcellular location is the cytoplasm. It carries out the reaction guanosine(37) in tRNA + S-adenosyl-L-methionine = N(1)-methylguanosine(37) in tRNA + S-adenosyl-L-homocysteine + H(+). Specifically methylates guanosine-37 in various tRNAs. In Colwellia psychrerythraea (strain 34H / ATCC BAA-681) (Vibrio psychroerythus), this protein is tRNA (guanine-N(1)-)-methyltransferase.